A 93-amino-acid polypeptide reads, in one-letter code: MPRSLKKGPFIDDHLLKKVVKAQESGDRKVIQTWSRRSTIIPEMVGLTFAVHNGRKFIPVFVTENMVGHKLGEFSPTRTYYGHAADKKSKAKR.

It belongs to the universal ribosomal protein uS19 family.

In terms of biological role, protein S19 forms a complex with S13 that binds strongly to the 16S ribosomal RNA. The sequence is that of Small ribosomal subunit protein uS19 from Maridesulfovibrio salexigens (strain ATCC 14822 / DSM 2638 / NCIMB 8403 / VKM B-1763) (Desulfovibrio salexigens).